We begin with the raw amino-acid sequence, 481 residues long: Probable squalene synthase (481 aa).

Transmembrane regions (helical) follow at residues 294–314 (SVFNFVAIPQAMAIATLELVF) and 416–436 (FLVLSMIGVLFVMGGLMIGAA).

It belongs to the phytoene/squalene synthase family. Mg(2+) serves as cofactor.

The protein resides in the endoplasmic reticulum membrane. The catalysed reaction is 2 (2E,6E)-farnesyl diphosphate + NADPH + H(+) = squalene + 2 diphosphate + NADP(+). It catalyses the reaction 2 (2E,6E)-farnesyl diphosphate + NADH + H(+) = squalene + 2 diphosphate + NAD(+). It participates in terpene metabolism; lanosterol biosynthesis; lanosterol from farnesyl diphosphate: step 1/3. In terms of biological role, catalyzes the condensation of 2 two farnesyl pyrophosphate moieties to form squalene. It is the first committed enzyme of the sterol biosynthesis pathway. Required for the biosynthesis of ergosterol. This is Probable squalene synthase (erg-6) from Neurospora crassa (strain ATCC 24698 / 74-OR23-1A / CBS 708.71 / DSM 1257 / FGSC 987).